Here is a 143-residue protein sequence, read N- to C-terminus: Hemoglobin subunit alpha-2 (143 aa).

Residue S2 is modified to N-acetylserine. A Globin domain is found at S2–R143. H60 is an O2 binding site. H89 contacts heme b.

Belongs to the globin family. As to quaternary structure, hb 2 is a heterotetramer of two alpha-2 and two beta-1 chains. Hb 3 is a heterotetramer of two alpha-2 and two beta-2 chains. As to expression, red blood cells.

Functionally, involved in oxygen transport from gills to the various peripheral tissues. This is Hemoglobin subunit alpha-2 (hba2) from Boreogadus saida (Polar cod).